Here is a 498-residue protein sequence, read N- to C-terminus: ATP synthase subunit beta, chloroplastic (498 aa).

Residue 172–179 coordinates ATP; sequence GGAGVGKT.

The protein belongs to the ATPase alpha/beta chains family. In terms of assembly, F-type ATPases have 2 components, CF(1) - the catalytic core - and CF(0) - the membrane proton channel. CF(1) has five subunits: alpha(3), beta(3), gamma(1), delta(1), epsilon(1). CF(0) has four main subunits: a(1), b(1), b'(1) and c(9-12).

It localises to the plastid. The protein resides in the chloroplast thylakoid membrane. The enzyme catalyses ATP + H2O + 4 H(+)(in) = ADP + phosphate + 5 H(+)(out). Produces ATP from ADP in the presence of a proton gradient across the membrane. The catalytic sites are hosted primarily by the beta subunits. This Calycanthus floridus (Eastern sweetshrub) protein is ATP synthase subunit beta, chloroplastic.